The sequence spans 303 residues: Geranylgeranyl pyrophosphate synthase (303 aa).

The isopentenyl diphosphate site is built by Lys-30, Arg-33, and His-62. 2 residues coordinate Mg(2+): Asp-69 and Asp-73. Arg-78 serves as a coordination point for dimethylallyl diphosphate. Arg-79 lines the isopentenyl diphosphate pocket. Residues Lys-156, Thr-157, Gln-190, Lys-207, and Lys-217 each coordinate dimethylallyl diphosphate.

It belongs to the FPP/GGPP synthase family. Mg(2+) is required as a cofactor.

Its subcellular location is the cytoplasm. The enzyme catalyses isopentenyl diphosphate + dimethylallyl diphosphate = (2E)-geranyl diphosphate + diphosphate. It carries out the reaction isopentenyl diphosphate + (2E)-geranyl diphosphate = (2E,6E)-farnesyl diphosphate + diphosphate. It catalyses the reaction isopentenyl diphosphate + (2E,6E)-farnesyl diphosphate = (2E,6E,10E)-geranylgeranyl diphosphate + diphosphate. It participates in isoprenoid biosynthesis; farnesyl diphosphate biosynthesis; farnesyl diphosphate from geranyl diphosphate and isopentenyl diphosphate: step 1/1. Its pathway is isoprenoid biosynthesis; geranyl diphosphate biosynthesis; geranyl diphosphate from dimethylallyl diphosphate and isopentenyl diphosphate: step 1/1. It functions in the pathway isoprenoid biosynthesis; geranylgeranyl diphosphate biosynthesis; geranylgeranyl diphosphate from farnesyl diphosphate and isopentenyl diphosphate: step 1/1. Its function is as follows. Catalyzes the trans-addition of the three molecules of IPP onto DMAPP to form geranylgeranyl pyrophosphate. The protein is Geranylgeranyl pyrophosphate synthase of Mucor circinelloides f. lusitanicus (Mucor racemosus var. lusitanicus).